Consider the following 80-residue polypeptide: RNA-binding protein Hfq (80 aa).

One can recognise a Sm domain in the interval 10 to 69 (DPFLNTLRREHVPVSIYLVNGIKLQGQIESFDQYVVLLKNTVTQMVYKHAISTVVPARPV).

It belongs to the Hfq family. In terms of assembly, homohexamer.

RNA chaperone that binds small regulatory RNA (sRNAs) and mRNAs to facilitate mRNA translational regulation in response to envelope stress, environmental stress and changes in metabolite concentrations. Also binds with high specificity to tRNAs. The protein is RNA-binding protein Hfq of Azoarcus sp. (strain BH72).